The chain runs to 176 residues: Large ribosomal subunit protein uL6 (176 aa).

A compositionally biased stretch (basic and acidic residues) spans 151-169 (RPPEPYKGRGIKYTDEHIQ). The disordered stretch occupies residues 151-176 (RPPEPYKGRGIKYTDEHIQRKAGKTK).

The protein belongs to the universal ribosomal protein uL6 family. Part of the 50S ribosomal subunit.

Functionally, this protein binds to the 23S rRNA, and is important in its secondary structure. It is located near the subunit interface in the base of the L7/L12 stalk, and near the tRNA binding site of the peptidyltransferase center. The chain is Large ribosomal subunit protein uL6 from Desulfosudis oleivorans (strain DSM 6200 / JCM 39069 / Hxd3) (Desulfococcus oleovorans).